A 57-amino-acid chain; its full sequence is uncharacterized protein (57 aa).

A signal peptide spans 1–24 (MYDTWFVLTAVVLFVLVLIGNVHG).

As to expression, prismatic layer of shell (at protein level).

The protein resides in the secreted. This is an uncharacterized protein from Margaritifera margaritifera (Freshwater pearl mussel).